A 471-amino-acid chain; its full sequence is Siroheme synthase 1 (471 aa).

The segment at 1–203 (MEYLPLFAQL…GDTRAAEAVL (203 aa)) is precorrin-2 dehydrogenase /sirohydrochlorin ferrochelatase. NAD(+)-binding positions include 22 to 23 (EV) and 43 to 44 (KK). Position 128 is a phosphoserine (serine 128). Residues 215–471 (GEIILVGAGP…NLRSSVVNLA (257 aa)) form a uroporphyrinogen-III C-methyltransferase region. Proline 224 is an S-adenosyl-L-methionine binding site. The active-site Proton acceptor is the aspartate 247. Lysine 269 functions as the Proton donor in the catalytic mechanism. S-adenosyl-L-methionine is bound by residues 300 to 302 (GGD), isoleucine 305, 330 to 331 (TA), methionine 382, and glycine 411.

In the N-terminal section; belongs to the precorrin-2 dehydrogenase / sirohydrochlorin ferrochelatase family. This sequence in the C-terminal section; belongs to the precorrin methyltransferase family.

It carries out the reaction uroporphyrinogen III + 2 S-adenosyl-L-methionine = precorrin-2 + 2 S-adenosyl-L-homocysteine + H(+). The enzyme catalyses precorrin-2 + NAD(+) = sirohydrochlorin + NADH + 2 H(+). It catalyses the reaction siroheme + 2 H(+) = sirohydrochlorin + Fe(2+). It functions in the pathway cofactor biosynthesis; adenosylcobalamin biosynthesis; precorrin-2 from uroporphyrinogen III: step 1/1. It participates in cofactor biosynthesis; adenosylcobalamin biosynthesis; sirohydrochlorin from precorrin-2: step 1/1. The protein operates within porphyrin-containing compound metabolism; siroheme biosynthesis; precorrin-2 from uroporphyrinogen III: step 1/1. Its pathway is porphyrin-containing compound metabolism; siroheme biosynthesis; siroheme from sirohydrochlorin: step 1/1. It functions in the pathway porphyrin-containing compound metabolism; siroheme biosynthesis; sirohydrochlorin from precorrin-2: step 1/1. Its function is as follows. Multifunctional enzyme that catalyzes the SAM-dependent methylations of uroporphyrinogen III at position C-2 and C-7 to form precorrin-2 via precorrin-1. Then it catalyzes the NAD-dependent ring dehydrogenation of precorrin-2 to yield sirohydrochlorin. Finally, it catalyzes the ferrochelation of sirohydrochlorin to yield siroheme. The sequence is that of Siroheme synthase 1 from Cronobacter sakazakii (strain ATCC BAA-894) (Enterobacter sakazakii).